The primary structure comprises 93 residues: YcgL domain-containing protein VV1_0131 (93 aa).

A YcgL domain is found at Met-1–Lys-84. The interval Leu-72–Asp-93 is disordered.

In Vibrio vulnificus (strain CMCP6), this protein is YcgL domain-containing protein VV1_0131.